Here is a 324-residue protein sequence, read N- to C-terminus: Olfactory receptor 7G2 (324 aa).

Topologically, residues 1-25 (MEARNQTAISKFLLLGLIEDPELQP) are extracellular. A glycan (N-linked (GlcNAc...) asparagine) is linked at Asn-5. The chain crosses the membrane as a helical span at residues 26-46 (VLFSLFLSMYLVTILGNLLIL). Topologically, residues 47–54 (LAVISDSH) are cytoplasmic. A helical membrane pass occupies residues 55–75 (LHTPMYFFLSNLSFLDICLST). Over 76-99 (TTIPKMLVNIQAQNRSITYSGCLT) the chain is Extracellular. Asn-89 is a glycosylation site (N-linked (GlcNAc...) asparagine). The cysteines at positions 97 and 189 are disulfide-linked. A helical transmembrane segment spans residues 100-120 (QICFVLFFAGLENCLLAAMAY). Residues 121 to 139 (DRYVAICHPLRYTVIMNPR) lie on the Cytoplasmic side of the membrane. Residues 140 to 160 (LCGLLILLSLLTSVVNALLLS) traverse the membrane as a helical segment. Residues 161–197 (LMVLRLSFCTDLEIPLFFCELAQVIQLTCSDTLINNI) lie on the Extracellular side of the membrane. Residues 198 to 217 (LIYFAACIFGGVPLSGIILS) traverse the membrane as a helical segment. Over 218 to 237 (YTQITSCVLRMPSASGKHKA) the chain is Cytoplasmic. A helical membrane pass occupies residues 238 to 258 (VSTCGSHLSIVLLFYGAGLGV). Residues 259 to 271 (YISSVVTDSPRKT) lie on the Extracellular side of the membrane. The chain crosses the membrane as a helical span at residues 272–292 (AVASVMYSVFPQMVNPFIYSL). The Cytoplasmic segment spans residues 293-324 (RNKDMKGTLRKFIGRIPSLLWCAICFGFRFLE).

Belongs to the G-protein coupled receptor 1 family.

It is found in the cell membrane. Functionally, odorant receptor. In Homo sapiens (Human), this protein is Olfactory receptor 7G2 (OR7G2).